The primary structure comprises 100 residues: Co-chaperonin GroES (100 aa).

It belongs to the GroES chaperonin family. Heptamer of 7 subunits arranged in a ring. Interacts with the chaperonin GroEL.

It is found in the cytoplasm. In terms of biological role, together with the chaperonin GroEL, plays an essential role in assisting protein folding. The GroEL-GroES system forms a nano-cage that allows encapsulation of the non-native substrate proteins and provides a physical environment optimized to promote and accelerate protein folding. GroES binds to the apical surface of the GroEL ring, thereby capping the opening of the GroEL channel. The chain is Co-chaperonin GroES from Rhodothermus marinus (Rhodothermus obamensis).